Consider the following 234-residue polypeptide: LexA repressor (234 aa).

The H-T-H motif DNA-binding region spans 26–46 (FDEMKTALELTSKSGIHRLIT). Residues Ser-155 and Lys-193 each act as for autocatalytic cleavage activity in the active site.

Belongs to the peptidase S24 family. In terms of assembly, homodimer.

It carries out the reaction Hydrolysis of Ala-|-Gly bond in repressor LexA.. Its function is as follows. Represses a number of genes involved in the response to DNA damage (SOS response), including recA and lexA. In the presence of single-stranded DNA, RecA interacts with LexA causing an autocatalytic cleavage which disrupts the DNA-binding part of LexA, leading to derepression of the SOS regulon and eventually DNA repair. This Bartonella henselae (strain ATCC 49882 / DSM 28221 / CCUG 30454 / Houston 1) (Rochalimaea henselae) protein is LexA repressor.